A 214-amino-acid polypeptide reads, in one-letter code: MNDKISFLPPEPIQLLDEDSTEPELDIDSQQENEGPISASNSNDSTSHSNDCGATITRTRPRRSSSINANFSFQKAHVSDCTIVNGDHGTKFAVWRITVFLEPNLKAFAAKRESYKIQTYKRYSDFVRLRENLLTRIKTAKPEKLNCLQIPHLPPSVQWYSSWKYQEVNLNKDWLAKRQRGLEYFLNHIILNSSLVEMTKDILIQFLEPSKRVA.

Positions 1-63 (MNDKISFLPP…ATITRTRPRR (63 aa)) are disordered. Residues 5 to 15 (ISFLPPEPIQL) carry the PxP motif. The span at 16–31 (LDEDSTEPELDIDSQQ) shows a compositional bias: acidic residues. A compositionally biased stretch (low complexity) spans 38–58 (SASNSNDSTSHSNDCGATITR). Phosphoserine occurs at positions 65 and 66. The 141-residue stretch at 73–213 (FQKAHVSDCT…IQFLEPSKRV (141 aa)) folds into the PX domain.

This sequence belongs to the YPT35 family. In terms of assembly, interacts with RBD2, YIF1, YIP1 and YIP4.

It is found in the endosome membrane. The protein resides in the vacuole membrane. Recruits the lipid transfer protein VPS13 to endosomal and vacuolar membranes. The protein is Endosomal/vacuolar adapter protein YPT35 (YPT35) of Saccharomyces cerevisiae (strain YJM789) (Baker's yeast).